We begin with the raw amino-acid sequence, 85 residues long: Small ribosomal subunit protein uS17 (85 aa).

This sequence belongs to the universal ribosomal protein uS17 family. In terms of assembly, part of the 30S ribosomal subunit.

One of the primary rRNA binding proteins, it binds specifically to the 5'-end of 16S ribosomal RNA. This Rhodospirillum centenum (strain ATCC 51521 / SW) protein is Small ribosomal subunit protein uS17.